We begin with the raw amino-acid sequence, 128 residues long: Large ribosomal subunit protein bL17 (128 aa).

It belongs to the bacterial ribosomal protein bL17 family. In terms of assembly, part of the 50S ribosomal subunit. Contacts protein L32.

The sequence is that of Large ribosomal subunit protein bL17 from Edwardsiella ictaluri (strain 93-146).